A 314-amino-acid chain; its full sequence is MIEIEKPRIETIEISEDAKFGKFVVEPLERGYGTTLGNSLRRILLSSLPGAAVKYIEIEGVLHEFSAVDNVVEDVSTIIMNIKQLALKIYSEEDKTLEIDVRDEGEVTASDITHDSDVEILNPELKIATVSKGGHLKIRLVANKGRGYALAEQNNTSDLPIGVIPVDSLYSPVERVNYTVENTRVGQSSDFDKLTLDVWTNGSITPQESVSLAAKIMTEHLNIFVGLTDEAQNAEIMIEKEEDQKEKVLEMSIEELDLSVRSYNCLKRAGINSVQELADKSEADMMKVRNLGRKSLEEVKYKLEDLGLGLRKED.

The interval 1 to 228 (MIEIEKPRIE…EHLNIFVGLT (228 aa)) is alpha N-terminal domain (alpha-NTD). The interval 246-314 (EKVLEMSIEE…DLGLGLRKED (69 aa)) is alpha C-terminal domain (alpha-CTD).

Belongs to the RNA polymerase alpha chain family. Homodimer. The RNAP catalytic core consists of 2 alpha, 1 beta, 1 beta' and 1 omega subunit. When a sigma factor is associated with the core the holoenzyme is formed, which can initiate transcription.

The catalysed reaction is RNA(n) + a ribonucleoside 5'-triphosphate = RNA(n+1) + diphosphate. Its function is as follows. DNA-dependent RNA polymerase catalyzes the transcription of DNA into RNA using the four ribonucleoside triphosphates as substrates. The protein is DNA-directed RNA polymerase subunit alpha of Staphylococcus aureus (strain Mu3 / ATCC 700698).